A 338-amino-acid polypeptide reads, in one-letter code: Putative acyl-[acyl-carrier-protein] desaturase DesA1 (338 aa).

E76, E107, H110, E167, E197, and H200 together coordinate Fe cation. The span at 314 to 328 shows a compositional bias: basic and acidic residues; sequence EARTGKKVSAHELHK. The disordered stretch occupies residues 314–338; it reads EARTGKKVSAHELHKTAGKLAMSRR.

It belongs to the fatty acid desaturase type 2 family. Homodimer. Fe(2+) is required as a cofactor.

Its subcellular location is the cell surface. It participates in lipid metabolism; fatty acid metabolism. Functionally, may be a desaturase involved in mycobacterial fatty acid biosynthesis. The protein is Putative acyl-[acyl-carrier-protein] desaturase DesA1 (desA1) of Mycobacterium tuberculosis (strain CDC 1551 / Oshkosh).